A 27-amino-acid chain; its full sequence is Caerulein precursor fragment R8 (27 aa).

In terms of tissue distribution, expressed by the skin glands.

The protein resides in the secreted. Its function is as follows. Antimicrobial peptide. The protein is Caerulein precursor fragment R8 of Xenopus ruwenzoriensis (Uganda clawed frog).